The following is a 223-amino-acid chain: Small ribosomal subunit protein uS3 (223 aa).

The 70-residue stretch at 39 to 108 (IRNFVKKNSY…NILINIVEVK (70 aa)) folds into the KH type-2 domain.

The protein belongs to the universal ribosomal protein uS3 family. In terms of assembly, part of the 30S ribosomal subunit. Forms a tight complex with proteins S10 and S14.

Binds the lower part of the 30S subunit head. Binds mRNA in the 70S ribosome, positioning it for translation. The sequence is that of Small ribosomal subunit protein uS3 from Clostridium botulinum (strain 657 / Type Ba4).